Consider the following 422-residue polypeptide: MSSSCSGLSRVLVAVATALVSASSPCPQAWGPPGVQYGQPGRSVKLCCPGVTAGDPVSWFRDGEPKLLQGPDSGLGHELVLAQADSTDEGTYICRTLDGALGGTVTLQLGYPPARPVVSCQAADYENFSCTWSPSQISGLPTRYLTSYRKKTVLGADSQRRSPSTGPWPCPQDPLGAARCVVHGAEFWSQYRINVTEVNPLGASTRLLDVSLQSILRPDPPQGLRVESVPGYPRRLRASWTYPASWPRQPHFLLKFRLQYRPAQHPAWSTVEPAGLEEVITDAVAGLPHAVRVSARDFLDAGTWSTWSPEAWGTPSTGTVPKEIPAWGQLHTQPEVEPQVDSPAPPRPSLQPHPRLLDHRDSVEQVAVLVSLGILSFLGLVAGALALGLWLRLRRGGKDGSPKPGFLASVIPVDRHPGAPNL.

Positions 1–22 are cleaved as a signal peptide; sequence MSSSCSGLSRVLVAVATALVSA. Topologically, residues 24–370 are extracellular; the sequence is SPCPQAWGPP…DSVEQVAVLV (347 aa). In terms of domain architecture, Ig-like C2-type spans 27 to 110; the sequence is PQAWGPPGVQ…LGGTVTLQLG (84 aa). Intrachain disulfides connect cysteine 48/cysteine 94, cysteine 120/cysteine 130, and cysteine 170/cysteine 180. Fibronectin type-III domains lie at 112–219 and 220–317; these read PPAR…LRPD and PPQG…TPST. The N-linked (GlcNAc...) asparagine glycan is linked to asparagine 127. N-linked (GlcNAc...) asparagine glycosylation is present at asparagine 194. The WSXWS motif motif lies at 304-308; sequence WSTWS. Residues 335–355 form a disordered region; it reads EVEPQVDSPAPPRPSLQPHPR. Residues 371 to 391 traverse the membrane as a helical segment; sequence SLGILSFLGLVAGALALGLWL. Residues 392–422 are Cytoplasmic-facing; it reads RLRRGGKDGSPKPGFLASVIPVDRHPGAPNL.

The protein belongs to the type I cytokine receptor family. Type 3 subfamily. In terms of assembly, on IL11 binding, forms a multimer complex with IL6ST/gp130. Post-translationally, a short soluble form is also released from the membrane by proteolysis. The sIL11RA is formed either by limited proteolysis of membrane-bound receptors, a process referred to as ectodomain shedding, or directly secreted from the cells after alternative mRNA splicing. mIL11RA is cleaved by the proteases ADAM10, ELANE and PRTN3.

It localises to the membrane. It is found in the secreted. Its function is as follows. Receptor for interleukin-11 (IL11). The receptor systems for IL6, LIF, OSM, CNTF, IL11 and CT1 can utilize IL6ST for initiating signal transmission. The IL11/IL11RA/IL6ST complex may be involved in the control of proliferation and/or differentiation of skeletogenic progenitor or other mesenchymal cells. Essential for the normal development of craniofacial bones and teeth. Restricts suture fusion and tooth number. Functionally, soluble form of IL11 receptor (sIL11RA) that acts as an agonist of IL11 activity. The IL11:sIL11RA complex binds to IL6ST/gp130 on cell surfaces and induces signaling also on cells that do not express membrane-bound IL11RA in a process called IL11 trans-signaling. This is Interleukin-11 receptor subunit alpha (IL11RA) from Pongo abelii (Sumatran orangutan).